The following is a 342-amino-acid chain: Uroporphyrinogen decarboxylase (342 aa).

Substrate-binding positions include 22–26, F41, D72, Y146, S201, and H317; that span reads RQAGR.

Belongs to the uroporphyrinogen decarboxylase family. Homodimer.

The protein resides in the cytoplasm. The enzyme catalyses uroporphyrinogen III + 4 H(+) = coproporphyrinogen III + 4 CO2. The protein operates within porphyrin-containing compound metabolism; protoporphyrin-IX biosynthesis; coproporphyrinogen-III from 5-aminolevulinate: step 4/4. Its function is as follows. Catalyzes the decarboxylation of four acetate groups of uroporphyrinogen-III to yield coproporphyrinogen-III. This chain is Uroporphyrinogen decarboxylase, found in Orientia tsutsugamushi (strain Boryong) (Rickettsia tsutsugamushi).